Reading from the N-terminus, the 363-residue chain is Protein CPn_1058/CP_0792/CPj1058/CpB1100 (363 aa).

Positions 1–27 are cleaved as a signal peptide; sequence MKLYQTLRGIVLVSTGCIFLGMHGGYA.

Belongs to the chlamydial CPn_1058/CT_355/TC_0634 family.

The protein is Protein CPn_1058/CP_0792/CPj1058/CpB1100 of Chlamydia pneumoniae (Chlamydophila pneumoniae).